The sequence spans 1142 residues: E3 ubiquitin-protein ligase TRIM33 (1142 aa).

The span at 1–18 shows a compositional bias: gly residues; the sequence is MAENKGGGEAESGGGGSG. The disordered stretch occupies residues 1 to 132; sequence MAENKGGGEA…PGSSSGPPLG (132 aa). Residues 1-163 are necessary for E3 ubiquitin-protein ligase activity and repression of SMAD4 signaling and transcriptional repression; the sequence is MAENKGGGEA…AEPKLLPCLH (163 aa). The span at 19-42 shows a compositional bias: low complexity; the sequence is SAPVTAGAAGPTAQEAEPPLAAVL. Residues 52 to 64 are compositionally biased toward gly residues; it reads RAGAEGGAAGPDD. Residues 65 to 99 show a composition bias toward low complexity; sequence GGVAAASSSSAPAASVPAASVGSAVPGGAASTPAP. Positions 100-122 are enriched in pro residues; it reads AAAPAPAPAPAPAPAPAPAPAPA. The RING-type zinc finger occupies 141–201; that stretch reads CAVCQQSLQS…VGVIRCPVCR (61 aa). 2 consecutive B box-type zinc fingers follow at residues 228-275 and 287-328; these read KSEQ…IRKK and QRPV…YQFL. 8 residues coordinate Zn(2+): C233, C236, C257, H261, C292, H295, C315, and H320. The tract at residues 315-417 is necessary for oligomerization; the sequence is CQLLEHKEHR…QMKLLQQQND (103 aa). Residues 315 to 417 adopt a coiled-coil conformation; sequence CQLLEHKEHR…QMKLLQQQND (103 aa). Glycyl lysine isopeptide (Lys-Gly) (interchain with G-Cter in SUMO2) cross-links involve residues K345, K350, K497, and K520. R531 carries the post-translational modification Asymmetric dimethylarginine; alternate. At R531 the chain carries Omega-N-methylarginine; alternate. Residue K543 forms a Glycyl lysine isopeptide (Lys-Gly) (interchain with G-Cter in SUMO2) linkage. R551 is subject to Omega-N-methylarginine. The residue at position 593 (R593) is an Asymmetric dimethylarginine. R607 is modified (asymmetric dimethylarginine; alternate). R607 is modified (omega-N-methylarginine; alternate). Asymmetric dimethylarginine occurs at positions 614 and 620. Disordered regions lie at residues 657–676, 688–707, and 718–834; these read PTSP…TSPS, NPEN…EDAG, and YISG…PPLS. Low complexity predominate over residues 738–774; that stretch reads PSALSPGSSGLSNSHTPVRPPSTSSTGSRGSCGSSGR. 2 stretches are compositionally biased toward basic and acidic residues: residues 775-794 and 808-817; these read TAEK…KQEP and KQEKTEDGRR. N6-acetyllysine; alternate occurs at positions 778 and 784. Glycyl lysine isopeptide (Lys-Gly) (interchain with G-Cter in SUMO2); alternate cross-links involve residues K778 and K784. Residue K789 forms a Glycyl lysine isopeptide (Lys-Gly) (interchain with G-Cter in SUMO2) linkage. Glycyl lysine isopeptide (Lys-Gly) (interchain with G-Cter in SUMO2); alternate cross-links involve residues K791 and K808. Residues K791 and K808 each participate in a glycyl lysine isopeptide (Lys-Gly) (interchain with G-Cter in SUMO1); alternate cross-link. K808 carries the post-translational modification N6-acetyllysine; alternate. K811 participates in a covalent cross-link: Glycyl lysine isopeptide (Lys-Gly) (interchain with G-Cter in SUMO2). S818 carries the phosphoserine modification. Residues 822-834 are compositionally biased toward low complexity; it reads LSSPESSLTPPLS. T830 bears the Phosphothreonine mark. K876 participates in a covalent cross-link: Glycyl lysine isopeptide (Lys-Gly) (interchain with G-Cter in SUMO2). S877 carries the phosphoserine modification. A PHD-type zinc finger spans residues 902–949; sequence EDWCAVCQNGGDLLCCEKCPKVFHLTCHVPTLLSFPSGDWICTFCRDI. K966 is modified (N6-acetyllysine). Position 968 is an N6-acetyllysine; alternate (K968). K968 participates in a covalent cross-link: Glycyl lysine isopeptide (Lys-Gly) (interchain with G-Cter in SUMO2); alternate. The region spanning 972–1095 is the Bromo domain; that stretch reads GLSPVDQRKC…LYFEDKLSEI (124 aa). Glycyl lysine isopeptide (Lys-Gly) (interchain with G-Cter in SUMO2) cross-links involve residues K1022 and K1058. A Phosphothreonine modification is found at T1066. K1072 is covalently cross-linked (Glycyl lysine isopeptide (Lys-Gly) (interchain with G-Cter in SUMO2)). The tract at residues 1103–1142 is disordered; the sequence is PLPEFEQDEDDGEVTEDSDEDFIQPRRKRLKSDERPVHIK. The span at 1107 to 1124 shows a compositional bias: acidic residues; sequence FEQDEDDGEVTEDSDEDF. At T1117 the chain carries Phosphothreonine. Residue S1120 is modified to Phosphoserine. Residue K1133 forms a Glycyl lysine isopeptide (Lys-Gly) (interchain with G-Cter in SUMO2) linkage. The segment covering 1133–1142 has biased composition (basic and acidic residues); sequence KSDERPVHIK. The residue at position 1134 (S1134) is a Phosphoserine.

This sequence belongs to the TRIM/RBCC family. As to quaternary structure, homooligomer and heterooligomer with TRIM24 and TRIM28 family members. Interacts with SMAD4 in unstimulated cells. Found in a complex with SMAD2 and SMAD3 upon addition of TGF-beta. Interacts with SMAD2 and SMAD3. Interacts with SMAD4 under basal and induced conditions and, upon TGF-beta signaling, with activated SMAD2. Forms a ternary complex with SMAD4 and SMAD2 upon TGF-beta signaling. In terms of processing, sumoylated with SUMO1. In terms of tissue distribution, ubiquitous with high level in testis.

Its subcellular location is the nucleus. It carries out the reaction S-ubiquitinyl-[E2 ubiquitin-conjugating enzyme]-L-cysteine + [acceptor protein]-L-lysine = [E2 ubiquitin-conjugating enzyme]-L-cysteine + N(6)-ubiquitinyl-[acceptor protein]-L-lysine.. Its pathway is protein modification; protein ubiquitination. Functionally, acts as an E3 ubiquitin-protein ligase. Promotes SMAD4 ubiquitination, nuclear exclusion and degradation via the ubiquitin proteasome pathway. May act as a transcriptional repressor. Inhibits the transcriptional response to TGF-beta/BMP signaling cascade. Plays a role in the control of cell proliferation. Its association with SMAD2 and SMAD3 stimulates erythroid differentiation of hematopoietic stem/progenitor. Monoubiquitinates SMAD4 and acts as an inhibitor of SMAD4-dependent TGF-beta/BMP signaling cascade (Monoubiquitination of SMAD4 hampers its ability to form a stable complex with activated SMAD2/3 resulting in inhibition of TGF-beta/BMP signaling cascade). This chain is E3 ubiquitin-protein ligase TRIM33 (Trim33), found in Mus musculus (Mouse).